The chain runs to 1953 residues: Putative surface-exposed virulence protein BigA (1953 aa).

An N-terminal signal peptide occupies residues M1–A27. Disordered stretches follow at residues N31–A50, G88–N258, and T1496–L1517. The stretch at P101–N103 is one 1; truncated repeat. The tract at residues P101–S252 is 15 X 11 AA tandem repeats. The stretch at G104 to G113 is one 2; truncated repeat. The 3; truncated repeat unit spans residues G114–G122. 11 tandem repeats follow at residues G123–D133, D134–D144, D145–D155, D156–D166, D167–D177, G178–D188, D189–D199, D200–D210, D211–D221, D222–D232, and D233–D243. Acidic residues-rich tracts occupy residues D141–D177 and D185–P249. Residues D244 to S252 form a 15; truncated repeat. An Autotransporter domain is found at S1649–F1952.

This chain is Putative surface-exposed virulence protein BigA (bigA), found in Salmonella typhimurium (strain LT2 / SGSC1412 / ATCC 700720).